Consider the following 207-residue polypeptide: MARYLGPKAKLSRREGTDLFLKSARRSIQDKAKFDSKPGQHGRTSGQRTSDYGLQLREKQKVKRMYGVLEKQFRRYFEEADRRRGNTGANLLFILESRLDNVVYRMGFGSTRAEARQLVSHKAITVNGQSVNIPSYLVKTGDVIAVRDKSKKQTRIAEALQLAQQVGIPAWVEVNADKAEGTFKKVPDRDEFAADINESLIVELYSR.

Residues 29 to 38 are compositionally biased toward basic and acidic residues; sequence QDKAKFDSKP. The tract at residues 29-54 is disordered; sequence QDKAKFDSKPGQHGRTSGQRTSDYGL. The span at 42-52 shows a compositional bias: polar residues; sequence GRTSGQRTSDY. Positions 97 to 160 constitute an S4 RNA-binding domain; sequence SRLDNVVYRM…KKQTRIAEAL (64 aa).

Belongs to the universal ribosomal protein uS4 family. In terms of assembly, part of the 30S ribosomal subunit. Contacts protein S5. The interaction surface between S4 and S5 is involved in control of translational fidelity.

Functionally, one of the primary rRNA binding proteins, it binds directly to 16S rRNA where it nucleates assembly of the body of the 30S subunit. In terms of biological role, with S5 and S12 plays an important role in translational accuracy. In Variovorax paradoxus (strain S110), this protein is Small ribosomal subunit protein uS4.